Consider the following 424-residue polypeptide: Adenylosuccinate synthetase (424 aa).

GTP-binding positions include 12–18 (GDEGKGK) and 40–42 (GHT). The Proton acceptor role is filled by Asp13. The Mg(2+) site is built by Asp13 and Gly40. IMP-binding positions include 13–16 (DEGK), 38–41 (NAGH), Thr130, Arg144, Asn220, Thr235, and Arg299. His41 functions as the Proton donor in the catalytic mechanism. 295 to 301 (VTTGRRR) contacts substrate. GTP-binding positions include Arg301, 327 to 329 (KLD), and 412 to 414 (GTG).

The protein belongs to the adenylosuccinate synthetase family. As to quaternary structure, homodimer. Mg(2+) serves as cofactor.

The protein resides in the cytoplasm. It catalyses the reaction IMP + L-aspartate + GTP = N(6)-(1,2-dicarboxyethyl)-AMP + GDP + phosphate + 2 H(+). The protein operates within purine metabolism; AMP biosynthesis via de novo pathway; AMP from IMP: step 1/2. Its function is as follows. Plays an important role in the de novo pathway and in the salvage pathway of purine nucleotide biosynthesis. Catalyzes the first committed step in the biosynthesis of AMP from IMP. This Neosartorya fischeri (strain ATCC 1020 / DSM 3700 / CBS 544.65 / FGSC A1164 / JCM 1740 / NRRL 181 / WB 181) (Aspergillus fischerianus) protein is Adenylosuccinate synthetase.